The chain runs to 412 residues: Multifunctional CCA protein (412 aa).

ATP contacts are provided by Gly-8 and Arg-11. Positions 8 and 11 each coordinate CTP. Mg(2+) contacts are provided by Asp-21 and Asp-23. 3 residues coordinate ATP: Arg-91, Arg-137, and Arg-140. CTP is bound by residues Arg-91, Arg-137, and Arg-140. An HD domain is found at 228-329 (TGIHTLMTLS…VKLFDSIDAW (102 aa)).

The protein belongs to the tRNA nucleotidyltransferase/poly(A) polymerase family. Bacterial CCA-adding enzyme type 1 subfamily. As to quaternary structure, monomer. Can also form homodimers and oligomers. Requires Mg(2+) as cofactor. It depends on Ni(2+) as a cofactor.

The catalysed reaction is a tRNA precursor + 2 CTP + ATP = a tRNA with a 3' CCA end + 3 diphosphate. The enzyme catalyses a tRNA with a 3' CCA end + 2 CTP + ATP = a tRNA with a 3' CCACCA end + 3 diphosphate. Its function is as follows. Catalyzes the addition and repair of the essential 3'-terminal CCA sequence in tRNAs without using a nucleic acid template. Adds these three nucleotides in the order of C, C, and A to the tRNA nucleotide-73, using CTP and ATP as substrates and producing inorganic pyrophosphate. tRNA 3'-terminal CCA addition is required both for tRNA processing and repair. Also involved in tRNA surveillance by mediating tandem CCA addition to generate a CCACCA at the 3' terminus of unstable tRNAs. While stable tRNAs receive only 3'-terminal CCA, unstable tRNAs are marked with CCACCA and rapidly degraded. In Escherichia coli (strain K12 / MC4100 / BW2952), this protein is Multifunctional CCA protein.